A 72-amino-acid polypeptide reads, in one-letter code: Translation initiation factor IF-1 (72 aa).

The S1-like domain occupies 1–72 (MAKDDVIEVD…DKGRITFRYK (72 aa)).

The protein belongs to the IF-1 family. Component of the 30S ribosomal translation pre-initiation complex which assembles on the 30S ribosome in the order IF-2 and IF-3, IF-1 and N-formylmethionyl-tRNA(fMet); mRNA recruitment can occur at any time during PIC assembly.

The protein resides in the cytoplasm. One of the essential components for the initiation of protein synthesis. Stabilizes the binding of IF-2 and IF-3 on the 30S subunit to which N-formylmethionyl-tRNA(fMet) subsequently binds. Helps modulate mRNA selection, yielding the 30S pre-initiation complex (PIC). Upon addition of the 50S ribosomal subunit IF-1, IF-2 and IF-3 are released leaving the mature 70S translation initiation complex. The protein is Translation initiation factor IF-1 of Nitratiruptor sp. (strain SB155-2).